A 199-amino-acid chain; its full sequence is Peroxiredoxin 2 (199 aa).

The region spanning M1 to F152 is the Thioredoxin domain. C40 (cysteine sulfenic acid (-SOH) intermediate) is an active-site residue. Substrate is bound at residue R115.

This sequence belongs to the peroxiredoxin family. Prx6 subfamily. In terms of assembly, homodecamer. Pentamer of dimers that assemble into a ring structure.

It is found in the cytoplasm. It carries out the reaction a hydroperoxide + [thioredoxin]-dithiol = an alcohol + [thioredoxin]-disulfide + H2O. In terms of biological role, thiol-specific peroxidase that catalyzes the reduction of hydrogen peroxide and organic hydroperoxides to water and alcohols, respectively. Plays a role in cell protection against oxidative stress by detoxifying peroxides. This chain is Peroxiredoxin 2, found in Thermoplasma acidophilum (strain ATCC 25905 / DSM 1728 / JCM 9062 / NBRC 15155 / AMRC-C165).